A 132-amino-acid polypeptide reads, in one-letter code: Small ribosomal subunit protein uS8 (132 aa).

It belongs to the universal ribosomal protein uS8 family. In terms of assembly, part of the 30S ribosomal subunit. Contacts proteins S5 and S12.

Its function is as follows. One of the primary rRNA binding proteins, it binds directly to 16S rRNA central domain where it helps coordinate assembly of the platform of the 30S subunit. The sequence is that of Small ribosomal subunit protein uS8 from Xanthomonas euvesicatoria pv. vesicatoria (strain 85-10) (Xanthomonas campestris pv. vesicatoria).